Consider the following 497-residue polypeptide: Probable malate:quinone oxidoreductase (497 aa).

The protein belongs to the MQO family. The cofactor is FAD.

The catalysed reaction is (S)-malate + a quinone = a quinol + oxaloacetate. The protein operates within carbohydrate metabolism; tricarboxylic acid cycle; oxaloacetate from (S)-malate (quinone route): step 1/1. The sequence is that of Probable malate:quinone oxidoreductase from Prochlorococcus marinus subsp. pastoris (strain CCMP1986 / NIES-2087 / MED4).